Here is a 206-residue protein sequence, read N- to C-terminus: Thiamine-phosphate synthase (206 aa).

4-amino-2-methyl-5-(diphosphooxymethyl)pyrimidine contacts are provided by residues 36-40 (QLRMK) and N68. 2 residues coordinate Mg(2+): D69 and D88. S106 is a binding site for 4-amino-2-methyl-5-(diphosphooxymethyl)pyrimidine. A 2-[(2R,5Z)-2-carboxy-4-methylthiazol-5(2H)-ylidene]ethyl phosphate-binding site is contributed by 132–134 (TNT). Position 135 (K135) interacts with 4-amino-2-methyl-5-(diphosphooxymethyl)pyrimidine. Residues G162 and 182–183 (VS) each bind 2-[(2R,5Z)-2-carboxy-4-methylthiazol-5(2H)-ylidene]ethyl phosphate.

This sequence belongs to the thiamine-phosphate synthase family. Mg(2+) serves as cofactor.

The enzyme catalyses 2-[(2R,5Z)-2-carboxy-4-methylthiazol-5(2H)-ylidene]ethyl phosphate + 4-amino-2-methyl-5-(diphosphooxymethyl)pyrimidine + 2 H(+) = thiamine phosphate + CO2 + diphosphate. It catalyses the reaction 2-(2-carboxy-4-methylthiazol-5-yl)ethyl phosphate + 4-amino-2-methyl-5-(diphosphooxymethyl)pyrimidine + 2 H(+) = thiamine phosphate + CO2 + diphosphate. It carries out the reaction 4-methyl-5-(2-phosphooxyethyl)-thiazole + 4-amino-2-methyl-5-(diphosphooxymethyl)pyrimidine + H(+) = thiamine phosphate + diphosphate. The protein operates within cofactor biosynthesis; thiamine diphosphate biosynthesis; thiamine phosphate from 4-amino-2-methyl-5-diphosphomethylpyrimidine and 4-methyl-5-(2-phosphoethyl)-thiazole: step 1/1. Its function is as follows. Condenses 4-methyl-5-(beta-hydroxyethyl)thiazole monophosphate (THZ-P) and 2-methyl-4-amino-5-hydroxymethyl pyrimidine pyrophosphate (HMP-PP) to form thiamine monophosphate (TMP). This Methanococcus vannielii (strain ATCC 35089 / DSM 1224 / JCM 13029 / OCM 148 / SB) protein is Thiamine-phosphate synthase.